A 139-amino-acid chain; its full sequence is Putative translationally-controlled tumor protein-like protein TPT1P8 (139 aa).

Residues 1-139 form the TCTP domain; it reads MIIFQDLISH…KTTSSLLVKT (139 aa). A compositionally biased stretch (polar residues) spans 40-51; the sequence is TGNTDDSLIGRN. The interval 40-60 is disordered; it reads TGNTDDSLIGRNSSSESTEDE.

It belongs to the TCTP family.

The chain is Putative translationally-controlled tumor protein-like protein TPT1P8 (TPT1P8) from Homo sapiens (Human).